The sequence spans 419 residues: MKTSLRTLSVALAAALVSPSVLAIEKIDFHGYMRAGVGVSSDGGLAEWQKTMVGRLGNESDTYGEIGLGAEVYKKEDVSFYLDSMVSMLSDGSNDSETTIGDDAQFGLRQLNLQIKGLIPGDKEAVIWGGKRYYQRHDLHIIDTKYWNISGSGAGIENYTVGPGAVSVAWVRGDANDVDTRITGDSDVNINYIDVRYAGFKPWAGSWTEVGIDYAMPNPTKQQKEYGGLYDADNAVMLTGEISQDMFGGYNKLVLQYANKGLAQNMISQGGGWYDMWHKTDEAKGYRVINTGLIPITDKFSFNHVLTWGSANDITEYTDKTNLISLVGRAQYQFTQYVRAIGEVGGFYQKDTYHNGSNYKQGGEKYTIALGLAEGPDFLSRPELRVFASYLNDSENGKPFEDGTSNDTWNFGVQVEAWW.

The first 23 residues, 1–23 (MKTSLRTLSVALAAALVSPSVLA), serve as a signal peptide directing secretion.

This sequence belongs to the porin LamB (TC 1.B.3) family. Homotrimer formed of three 18-stranded antiparallel beta-barrels, containing three independent channels.

It localises to the cell outer membrane. It catalyses the reaction beta-maltose(in) = beta-maltose(out). Its function is as follows. Involved in the transport of maltose and maltodextrins. In Yersinia pestis bv. Antiqua (strain Antiqua), this protein is Maltoporin 2.